Reading from the N-terminus, the 331-residue chain is 6-phosphogluconolactonase (331 aa).

Lys287 is modified (N6-acetyllysine).

It belongs to the cycloisomerase 2 family.

It catalyses the reaction 6-phospho-D-glucono-1,5-lactone + H2O = 6-phospho-D-gluconate + H(+). It participates in carbohydrate degradation; pentose phosphate pathway; D-ribulose 5-phosphate from D-glucose 6-phosphate (oxidative stage): step 2/3. Functionally, catalyzes the hydrolysis of 6-phosphogluconolactone to 6-phosphogluconate. In Escherichia coli (strain SMS-3-5 / SECEC), this protein is 6-phosphogluconolactonase.